Consider the following 136-residue polypeptide: Small ribosomal subunit protein uS19 (136 aa).

Residues 117–136 form a disordered region; the sequence is VQHGDPGMGATRSSMFVPLK.

This sequence belongs to the universal ribosomal protein uS19 family.

Functionally, protein S19 forms a complex with S13 that binds strongly to the 16S ribosomal RNA. This is Small ribosomal subunit protein uS19 from Methanobrevibacter smithii (strain ATCC 35061 / DSM 861 / OCM 144 / PS).